The primary structure comprises 206 residues: Outer-membrane lipoprotein carrier protein (206 aa).

Positions 1 to 21 (MKKLLCAVLLSPLLYSNAVLA) are cleaved as a signal peptide.

It belongs to the LolA family. Monomer.

Its subcellular location is the periplasm. Its function is as follows. Participates in the translocation of lipoproteins from the inner membrane to the outer membrane. Only forms a complex with a lipoprotein if the residue after the N-terminal Cys is not an aspartate (The Asp acts as a targeting signal to indicate that the lipoprotein should stay in the inner membrane). In Shewanella sp. (strain MR-4), this protein is Outer-membrane lipoprotein carrier protein.